Consider the following 356-residue polypeptide: Phosphate acyltransferase (356 aa).

It belongs to the PlsX family. As to quaternary structure, homodimer. Probably interacts with PlsY.

The protein localises to the cytoplasm. It carries out the reaction a fatty acyl-[ACP] + phosphate = an acyl phosphate + holo-[ACP]. The protein operates within lipid metabolism; phospholipid metabolism. In terms of biological role, catalyzes the reversible formation of acyl-phosphate (acyl-PO(4)) from acyl-[acyl-carrier-protein] (acyl-ACP). This enzyme utilizes acyl-ACP as fatty acyl donor, but not acyl-CoA. The sequence is that of Phosphate acyltransferase from Shigella sonnei (strain Ss046).